A 1251-amino-acid chain; its full sequence is Topoisomerase 1-associated factor 1 (1251 aa).

Disordered regions lie at residues 328–354 (ERKMDSNKSFKPPRRARKEDMEPKDLG), 564–601 (RRKKKAAKAAGDQGDDEGQGDAEDDSADDERQAEKTSQ), 901–1021 (RRKT…YEGN), and 1041–1251 (ATFG…SDEE). The segment covering 344 to 354 (RKEDMEPKDLG) has biased composition (basic and acidic residues). Acidic residues predominate over residues 576–591 (QGDDEGQGDAEDDSAD). 2 stretches are compositionally biased toward basic and acidic residues: residues 592–601 (DERQAEKTSQ) and 985–1011 (AEARARARRKKELEKARKIKSEMYVDP). Acidic residues-rich tracts occupy residues 1069–1079 (DGDDGEGEDAV) and 1103–1122 (GGEDSEEGDEDDESRSEEDG). The segment covering 1123–1136 (SAVSEAEAPAAAGR) has biased composition (low complexity). Residues 1137–1151 (RPNKRRKPAQKKKKR) show a composition bias toward basic residues. Positions 1157–1179 (SGEDDDVGMDMDVDVDADADADA) are enriched in acidic residues. A compositionally biased stretch (polar residues) spans 1182 to 1205 (FTQSSKDGAVTNDTPLSSDPSRTT).

The protein belongs to the timeless family. In terms of assembly, component of the fork protection complex (FPC) consisting of TOF1 and CSM3.

It is found in the nucleus. Functionally, forms a fork protection complex (FPC) with CSM3 and which is required for chromosome segregation during meiosis and DNA damage repair. FPC coordinates leading and lagging strand synthesis and moves with the replication fork. FPC stabilizes replication forks in a configuration that is recognized by replication checkpoint sensors. The protein is Topoisomerase 1-associated factor 1 (TOF1) of Chaetomium globosum (strain ATCC 6205 / CBS 148.51 / DSM 1962 / NBRC 6347 / NRRL 1970) (Soil fungus).